The chain runs to 330 residues: Transcription factor zip1 (330 aa).

Basic and acidic residues predominate over residues 133–148 (SKETQEKTSSQRELFE). 2 disordered regions span residues 133–165 (SKETQEKTSSQRELFEQKSSVASASKDNVSSSS) and 238–277 (PSLSSYKGAQSPNANSKRTKATSAIRTAAEEDKRRRNTAA). Residues 150 to 165 (KSSVASASKDNVSSSS) show a composition bias toward low complexity. The segment covering 244-262 (KGAQSPNANSKRTKATSAI) has biased composition (polar residues). The 64-residue stretch at 264–327 (TAAEEDKRRR…NWLKGLIRPT (64 aa)) folds into the bZIP domain. The tract at residues 270 to 288 (KRRRNTAASARFRIKKKLK) is basic motif. A leucine-zipper region spans residues 292–320 (LERTAKELTEKVAILETRVRELEMENNWL).

The protein belongs to the bZIP family. As to quaternary structure, interacts with pof1.

The protein resides in the nucleus. Mediates cell growth arrest in response to cadmium exposure, which is essential to maintain cell viability. Regulates cadmium stress specific genes. The polypeptide is Transcription factor zip1 (zip1) (Schizosaccharomyces pombe (strain 972 / ATCC 24843) (Fission yeast)).